A 285-amino-acid chain; its full sequence is tRNA uridine(34) hydroxylase (285 aa).

The region spanning 130-225 (RGDDVVFFDG…YGEAFGDTGL (96 aa)) is the Rhodanese domain. Catalysis depends on Cys-185, which acts as the Cysteine persulfide intermediate.

Belongs to the TrhO family.

The enzyme catalyses uridine(34) in tRNA + AH2 + O2 = 5-hydroxyuridine(34) in tRNA + A + H2O. In terms of biological role, catalyzes oxygen-dependent 5-hydroxyuridine (ho5U) modification at position 34 in tRNAs. This chain is tRNA uridine(34) hydroxylase, found in Rhodococcus jostii (strain RHA1).